We begin with the raw amino-acid sequence, 117 residues long: Large ribosomal subunit protein bL20 (117 aa).

It belongs to the bacterial ribosomal protein bL20 family.

Functionally, binds directly to 23S ribosomal RNA and is necessary for the in vitro assembly process of the 50S ribosomal subunit. It is not involved in the protein synthesizing functions of that subunit. This chain is Large ribosomal subunit protein bL20, found in Vibrio campbellii (strain ATCC BAA-1116).